Consider the following 564-residue polypeptide: Threonine--tRNA ligase (564 aa).

Residues 167–464 form a catalytic region; that stretch reads DHRSLGKQLE…LLEKTSGNFP (298 aa). Zn(2+)-binding residues include cysteine 260, histidine 311, and histidine 441.

It belongs to the class-II aminoacyl-tRNA synthetase family. As to quaternary structure, homodimer. The cofactor is Zn(2+).

The protein resides in the cytoplasm. It catalyses the reaction tRNA(Thr) + L-threonine + ATP = L-threonyl-tRNA(Thr) + AMP + diphosphate + H(+). Catalyzes the attachment of threonine to tRNA(Thr) in a two-step reaction: L-threonine is first activated by ATP to form Thr-AMP and then transferred to the acceptor end of tRNA(Thr). Also edits incorrectly charged L-seryl-tRNA(Thr). The protein is Threonine--tRNA ligase of Mycoplasma genitalium (strain ATCC 33530 / DSM 19775 / NCTC 10195 / G37) (Mycoplasmoides genitalium).